A 243-amino-acid chain; its full sequence is UDP-2,3-diacylglucosamine hydrolase (243 aa).

Residues aspartate 8, histidine 10, aspartate 41, asparagine 79, and histidine 114 each contribute to the Mn(2+) site. Asparagine 79 to arginine 80 serves as a coordination point for substrate. Residues aspartate 122, lysine 164, lysine 167, and histidine 195 each coordinate substrate. The Mn(2+) site is built by histidine 195 and histidine 197.

The protein belongs to the LpxH family. Requires Mn(2+) as cofactor.

The protein localises to the cell inner membrane. The catalysed reaction is UDP-2-N,3-O-bis[(3R)-3-hydroxytetradecanoyl]-alpha-D-glucosamine + H2O = 2-N,3-O-bis[(3R)-3-hydroxytetradecanoyl]-alpha-D-glucosaminyl 1-phosphate + UMP + 2 H(+). It functions in the pathway glycolipid biosynthesis; lipid IV(A) biosynthesis; lipid IV(A) from (3R)-3-hydroxytetradecanoyl-[acyl-carrier-protein] and UDP-N-acetyl-alpha-D-glucosamine: step 4/6. Hydrolyzes the pyrophosphate bond of UDP-2,3-diacylglucosamine to yield 2,3-diacylglucosamine 1-phosphate (lipid X) and UMP by catalyzing the attack of water at the alpha-P atom. Involved in the biosynthesis of lipid A, a phosphorylated glycolipid that anchors the lipopolysaccharide to the outer membrane of the cell. The sequence is that of UDP-2,3-diacylglucosamine hydrolase from Vibrio vulnificus (strain YJ016).